The chain runs to 123 residues: Glucose starvation-inducible protein B (123 aa).

Composition is skewed to basic and acidic residues over residues 1-29 (MADN…KEFY) and 41-109 (SKNH…KEFY). Positions 1-123 (MADNNKMSRE…SKGGNARNND (123 aa)) are disordered. 5 consecutive repeat copies span residues 13-32 (GRKG…YQEI), 33-52 (GQKG…YQEI), 53-72 (GEKG…YQEI), 73-92 (GEKG…YQEI), and 93-112 (GRKG…YQEI). The segment at 13–120 (GRKGGETTSK…EIGSKGGNAR (108 aa)) is 5 X 20 AA approximate tandem repeats.

Its function is as follows. Involved in an adaptive response to nutrient deprivation other than sporulation. The chain is Glucose starvation-inducible protein B (gsiB) from Bacillus subtilis (strain 168).